A 316-amino-acid chain; its full sequence is Sorting nexin-20 (316 aa).

The interval 1–57 (MASHKHPGSPGWTGPICQDMAGTTPKASAPRPDLPRPGPEDHLEAQGSPSSNSSMTT) is disordered. At serine 3 the chain carries Phosphoserine. Over residues 47-57 (GSPSSNSSMTT) the composition is skewed to polar residues. The 118-residue stretch at 74-191 (VKLLFEIASA…DFLTRPELKE (118 aa)) folds into the PX domain. A 1,2-diacyl-sn-glycero-3-phospho-(1D-myo-inositol-3-phosphate)-binding residues include arginine 116, serine 118, lysine 143, and arginine 157.

It belongs to the sorting nexin family. As to quaternary structure, interacts with SELPLG. Interaction with SELPLG is controversial.

Its subcellular location is the early endosome membrane. It is found in the cell membrane. The protein localises to the cytoplasm. The protein resides in the nucleus. Its function is as follows. May play a role in cellular vesicle trafficking. Has been proposed to function as a sorting protein that targets SELPLG into endosomes, but has no effect on SELPLG internalization from the cell surface, or on SELPLG-mediated cell-cell adhesion. The sequence is that of Sorting nexin-20 (SNX20) from Bos taurus (Bovine).